We begin with the raw amino-acid sequence, 337 residues long: Perakine reductase (337 aa).

Catalysis depends on tyrosine 57, which acts as the Proton donor. Histidine 126 provides a ligand contact to substrate. NADP(+) is bound at residue 205–214 (SPIGRGLFAG).

It belongs to the aldo/keto reductase family.

The enzyme catalyses raucaffrinoline + NADP(+) = perakine + NADPH + H(+). Its function is as follows. Aldo-keto reductase involved in the biosynthesis of monoterpenoid indole alkaloids. Broad substrate specificity enzyme with a high selectivity in the group of alkaloids. Can use perakine, 19(S),20(R)-dihydro-peraksine-17,21-al, cinnamic aldehyde, p-coumaric aldehyde and 3-(3,4,5-trimethoxyphenyl)propanal as substrates, but not ketosteroids such as progesterone. NADPH could not be replaced by NADH. In Rauvolfia serpentina (Serpentine wood), this protein is Perakine reductase (PR).